We begin with the raw amino-acid sequence, 658 residues long: MATPVVTKTAWKLQEIVAHASNVSSLVLGKASGRLLATGGDDCRVNLWSINKPNCIMSLTGHTSPVESVRLNTPEELIVAGSQSGSIRVWDLEAAKILRTLMGHKANICSLDFHPYGEFVASGSQDTNIKLWDIRRKGCVFRYRGHSQAVRCLRFSPDGKWLASAADDHTVKLWDLTAGKMMSEFPGHTGPVNVVEFHPNEYLLASGSSDRTIRFWDLEKFQVVSCIEGEPGPVRSVLFNPDGCCLYSGCQDSLRVYGWEPERCFDVVLVNWGKVADLAICNDQLIGVAFSQSNVSSYVVDLTRVTRTGTVTQDPVQANQPLTQQTPNPGVSLRRIYERPSTTCSKPQRVKHNSESERRSPSSEDDRDERESRAEIQNAEDYNEIFQPKNSISRTPPRRSEPFPAPPEDDAATVKEVSKPSPAMDVQLPQLPVPNLEVPARPSVMTSTPAPKGEPDIIPATRNEPIGLKASDFLPAVKVPQQAELVDEDAMSQIRKGHDTMFVVLTSRHKNLDTVRAVWTTGDIKTSVDSAVAINDLSVVVDLLNIVNQKASLWKLDLCTTVLPQIEKLLQSKYESYVQTGCTSLKLILQRFLPLITDILAAPPSVGVDISREERLHKCRLCFKQLKSISGLVKSKSGLSGRHGSAFRELHLLMASLD.

The interaction with dynein stretch occupies residues 1–284 (MATPVVTKTA…VADLAICNDQ (284 aa)). An interaction with centrosomes region spans residues 1–300 (MATPVVTKTA…SQSNVSSYVV (300 aa)). WD repeat units lie at residues 18 to 58 (AHAS…CIMS), 61 to 100 (GHTS…ILRT), 103 to 142 (GHKA…CVFR), 145 to 184 (GHSQ…MMSE), 187 to 226 (GHTG…VVSC), and 229 to 269 (GEPG…DVVL). Residues 285–437 (LIGVAFSQSN…LPQLPVPNLE (153 aa)) form an interaction with PAFAH1B1 region. Polar residues predominate over residues 311-329 (VTQDPVQANQPLTQQTPNP). Disordered stretches follow at residues 311–419 (VTQD…EVSK) and 434–458 (PNLE…PDII). A compositionally biased stretch (basic and acidic residues) spans 352 to 374 (HNSESERRSPSSEDDRDERESRA). A Phosphothreonine modification is found at threonine 395. The segment at 436-658 (LEVPARPSVM…ELHLLMASLD (223 aa)) is interaction with KATNA1 and NDEL1.

The protein belongs to the WD repeat KATNB1 family. Interacts with KATNA1. This interaction enhances the microtubule binding and severing activity of KATNA1 and also targets this activity to the centrosome. This interaction is weakly competed by KATNBL1 which has a lower affinity for it. Interacts with ASPM; the katanin complex formation KATNA1:KATNB1 is required for the association of ASPM. Interacts with dynein, microtubules, NDEL1 and PAFAH1B1. Interacts with KATNAL1; this interaction is weakly competed by KATNBL1 which has a lower affinity for it. Interacts with CAMSAP2 and CAMSAP3; leading to regulate the length of CAMSAP-decorated microtubule stretches.

The protein localises to the cytoplasm. It localises to the cytoskeleton. Its subcellular location is the microtubule organizing center. The protein resides in the centrosome. It is found in the spindle pole. The protein localises to the spindle. Participates in a complex which severs microtubules in an ATP-dependent manner. May act to target the enzymatic subunit of this complex to sites of action such as the centrosome. Microtubule severing may promote rapid reorganization of cellular microtubule arrays and the release of microtubules from the centrosome following nucleation. Microtubule release from the mitotic spindle poles may allow depolymerization of the microtubule end proximal to the spindle pole, leading to poleward microtubule flux and poleward motion of chromosome. The function in regulating microtubule dynamics at spindle poles seems to depend on the association of the katanin KATNA1:KATNB1 complex with ASPM which recruits it to microtubules. Reversely KATNA1:KATNB1 can enhance ASPM blocking activity on microtubule minus-end growth. Microtubule release within the cell body of neurons may be required for their transport into neuronal processes by microtubule-dependent motor proteins. This transport is required for axonal growth. This is Katanin p80 WD40 repeat-containing subunit B1 (Katnb1) from Mus musculus (Mouse).